We begin with the raw amino-acid sequence, 792 residues long: Phenylalanine--tRNA ligase beta subunit (792 aa).

Positions 40–156 (FPRTENLIVG…AKLNDIDPLK (117 aa)) constitute a tRNA-binding domain. Residues 404-472 (LKDNLIDFDS…KKINVNNLEL (69 aa)) enclose the B5 domain. Residues Asp450, Asp456, Glu459, and Glu460 each coordinate Mg(2+).

It belongs to the phenylalanyl-tRNA synthetase beta subunit family. Type 1 subfamily. Tetramer of two alpha and two beta subunits. Mg(2+) serves as cofactor.

It localises to the cytoplasm. The catalysed reaction is tRNA(Phe) + L-phenylalanine + ATP = L-phenylalanyl-tRNA(Phe) + AMP + diphosphate + H(+). This is Phenylalanine--tRNA ligase beta subunit from Malacoplasma penetrans (strain HF-2) (Mycoplasma penetrans).